Consider the following 24-residue polypeptide: Coenzyme PQQ synthesis protein A (24 aa).

Positions 16 to 20 (EVTMY) form a cross-link, pyrroloquinoline quinone (Glu-Tyr).

This sequence belongs to the PqqA family.

Its pathway is cofactor biosynthesis; pyrroloquinoline quinone biosynthesis. Functionally, required for coenzyme pyrroloquinoline quinone (PQQ) biosynthesis. PQQ is probably formed by cross-linking a specific glutamate to a specific tyrosine residue and excising these residues from the peptide. This is Coenzyme PQQ synthesis protein A from Pseudomonas fluorescens (strain Pf0-1).